The sequence spans 247 residues: Ribonuclease PH (247 aa).

Phosphate is bound by residues Arg-87 and 125 to 127; that span reads GTR.

This sequence belongs to the RNase PH family. In terms of assembly, homohexameric ring arranged as a trimer of dimers.

It catalyses the reaction tRNA(n+1) + phosphate = tRNA(n) + a ribonucleoside 5'-diphosphate. In terms of biological role, phosphorolytic 3'-5' exoribonuclease that plays an important role in tRNA 3'-end maturation. Removes nucleotide residues following the 3'-CCA terminus of tRNAs; can also add nucleotides to the ends of RNA molecules by using nucleoside diphosphates as substrates, but this may not be physiologically important. Probably plays a role in initiation of 16S rRNA degradation (leading to ribosome degradation) during starvation. The chain is Ribonuclease PH from Nostoc sp. (strain PCC 7120 / SAG 25.82 / UTEX 2576).